Reading from the N-terminus, the 376-residue chain is MQKNLFTSESVGRGHPDKICDQISDSILDAVLKIDPNSRCAIEVMASNRLIIIGGEITTQGYVDLVSKSWEILISLGYTENDFTIISNVNEQSKEIANQVDRQDDNIGAGDQGIMFGFASDETKSFMPLAISIAHDLVKRAEKLRVENKINGLKSDMKSQVTIDYSDQKNPKIDTILMSLQHDKDVLLDNFRNDVKKLIIEPVVNDYNLNSNYKCFINPNGSFSIGGPIGDTGLTGRKIIVDTYGGAAHHGGGAFSGKDYTKVDRSAAYMARYIAKNLVAAKVAKKLEIQLSYGIGMIEPISINVNSFGTSKFSDLEITDFIRNNFSLSPKSIIEKLNLKNTKYFPTSFFGHFGRDDLDLPWEKLDQVDKIKKFFK.

Position 15 (histidine 15) interacts with ATP. Residue aspartate 17 coordinates Mg(2+). Residue glutamate 43 coordinates K(+). Positions 56 and 92 each coordinate L-methionine. The tract at residues 92-102 is flexible loop; it reads QSKEIANQVDR. ATP-binding positions include 156–158, aspartate 231, 237–238, alanine 254, and lysine 258; these read DMK and RK. Aspartate 231 provides a ligand contact to L-methionine. Position 262 (lysine 262) interacts with L-methionine.

It belongs to the AdoMet synthase family. Homotetramer; dimer of dimers. Mg(2+) is required as a cofactor. The cofactor is K(+).

It localises to the cytoplasm. It carries out the reaction L-methionine + ATP + H2O = S-adenosyl-L-methionine + phosphate + diphosphate. It functions in the pathway amino-acid biosynthesis; S-adenosyl-L-methionine biosynthesis; S-adenosyl-L-methionine from L-methionine: step 1/1. Its function is as follows. Catalyzes the formation of S-adenosylmethionine (AdoMet) from methionine and ATP. The overall synthetic reaction is composed of two sequential steps, AdoMet formation and the subsequent tripolyphosphate hydrolysis which occurs prior to release of AdoMet from the enzyme. The protein is S-adenosylmethionine synthase of Mycoplasmopsis pulmonis (strain UAB CTIP) (Mycoplasma pulmonis).